Reading from the N-terminus, the 385-residue chain is Isocitrate dehydrogenase [NAD] subunit beta, mitochondrial (385 aa).

A mitochondrion-targeting transit peptide spans 1 to 33; that stretch reads MAALSRVRWLTRALVAAPNPGAWRSLCTSTVAQ. Lys199 carries the post-translational modification N6-acetyllysine.

Belongs to the isocitrate and isopropylmalate dehydrogenases family. In terms of assembly, heterooligomer of subunits alpha (IDH3A), beta (IDH3B), and gamma (IDH3G) in the apparent ratio of 2:1:1. The heterodimer containing one IDH3A and one IDH3B subunit and the heterodimer containing one IDH3A and one IDH3G subunit assemble into a heterotetramer (which contains two subunits of IDH3A, one of IDH3B and one of IDH3G) and further into the heterooctamer. As to expression, isoform A is predominant in heart muscle; also found in brain, kidney and liver. Isoform B is present in kidney and liver.

The protein localises to the mitochondrion. With respect to regulation, the heterotetramer and the heterodimer composed of IDH3A and IDH3G subunits can be allosterically activated by citrate (CIT) or/and ADP, and the two activators can act independently or synergistically. The heterodimer composed of IDH3A and IDH3B subunits cannot be allosterically regulated and the allosteric regulation of the heterotetramer is through the IDH3G subunit and not the IDH3B subunit. The IDH3G subunit contains the allosteric site which consists of a CIT-binding site and an ADP-binding site, and the binding of CIT and ADP causes conformational changes at the allosteric site which are transmitted to the active site in the catalytic subunit (IDH3A) through a cascade of conformational changes at the heterodimer interface, leading to stabilization of the isocitrate-binding at the active site and thus activation of the enzyme. ATP can activate the heterotetramer and the heterodimer composed of IDH3A and IDH3G subunits at low concentrations but inhibits their activities at high concentrations, whereas ATP exhibits only inhibitory effect on the heterodimer composed of IDH3A and IDH3B subunits. Plays a structural role to facilitate the assembly and ensure the full activity of the enzyme catalyzing the decarboxylation of isocitrate (ICT) into alpha-ketoglutarate. The heterodimer composed of the alpha (IDH3A) and beta (IDH3B) subunits and the heterodimer composed of the alpha (IDH3A) and gamma (IDH3G) subunits, have considerable basal activity but the full activity of the heterotetramer (containing two subunits of IDH3A, one of IDH3B and one of IDH3G) requires the assembly and cooperative function of both heterodimers. This chain is Isocitrate dehydrogenase [NAD] subunit beta, mitochondrial (IDH3B), found in Bos taurus (Bovine).